The following is a 532-amino-acid chain: Optineurin (532 aa).

2 coiled-coil regions span residues 27 to 143 (SMKN…LKLG) and 195 to 466 (EEVA…EEMM). The CCHC NOA-type zinc finger occupies 502 to 532 (QPSITVYTCPKCNLTVPDMDTLQIHVMDCIT). Residues C510, C513, H526, and C530 each coordinate Zn(2+).

It is found in the cytoplasm. The protein resides in the perinuclear region. It localises to the golgi apparatus. The protein localises to the trans-Golgi network. Its subcellular location is the cytoplasmic vesicle. It is found in the recycling endosome. The protein resides in the autophagosome. In terms of biological role, probably part of the TNF-alpha signaling pathway that can shift the equilibrium toward induction of cell death. May act by regulating membrane trafficking and cellular morphogenesis. The sequence is that of Optineurin (optn) from Xenopus laevis (African clawed frog).